Consider the following 136-residue polypeptide: MFAQRQMFFARLAANLRAPAVRQTVQRRFASTPANESGKNAFVREREAVKQHAAETTELWRKISLYGIPPALALAGYNAYTLYNEHWEHWSHLPPLEERTEYPYQNIRTRNYPWGDGDKTLFWNESVNYHNRDKVT.

The transit peptide at 1–29 (MFAQRQMFFARLAANLRAPAVRQTVQRRF) directs the protein to the mitochondrion. The Mitochondrial matrix portion of the chain corresponds to 30-62 (ASTPANESGKNAFVREREAVKQHAAETTELWRK). The helical transmembrane segment at 63-83 (ISLYGIPPALALAGYNAYTLY) threads the bilayer. At 84-136 (NEHWEHWSHLPPLEERTEYPYQNIRTRNYPWGDGDKTLFWNESVNYHNRDKVT) the chain is on the mitochondrial intermembrane side.

The protein belongs to the cytochrome c oxidase subunit 6A family. In terms of assembly, component of the cytochrome c oxidase (complex IV, CIV), a multisubunit enzyme composed of 11 subunits. The complex is composed of a catalytic core of 3 subunits Cox1, Cox2 and Cox3, encoded in the mitochondrial DNA, and 8 supernumerary subunits Cox4, Cox5a/Cox5, Cox6, Cox7, Cox8, Cox7a/Cox9, Cox6b/Cox12 and Cox6a/Cox13, which are encoded in the nuclear genome. The complex exists as a monomer or a dimer and forms respiratory supercomplexes (SCs) in the inner mitochondrial membrane with NADH-ubiquinone oxidoreductase (complex I, CI) and ubiquinol-cytochrome c oxidoreductase (cytochrome b-c1 complex, complex III, CIII), resulting in various different assemblies (supercomplexes I(1)IV(1), I(1)III(3)IV(2), III(2)IV(1) and III(2)IV(2) as well as larger supercomplexes of compositions like I(1)III(2)IV(5-6)). Cox6a/Cox13 was not present in the cryo-EM structure. It may be involved in complex IV dimer formation and might not be always expressed. This would explain its absence in the map of the isolated monomer.

The protein localises to the mitochondrion inner membrane. It functions in the pathway energy metabolism; oxidative phosphorylation. Component of the cytochrome c oxidase, the last enzyme in the mitochondrial electron transport chain which drives oxidative phosphorylation. The respiratory chain contains 3 multisubunit complexes succinate dehydrogenase (complex II, CII), ubiquinol-cytochrome c oxidoreductase (cytochrome b-c1 complex, complex III, CIII) and cytochrome c oxidase (complex IV, CIV), that cooperate to transfer electrons derived from NADH and succinate to molecular oxygen, creating an electrochemical gradient over the inner membrane that drives transmembrane transport and the ATP synthase. Cytochrome c oxidase is the component of the respiratory chain that catalyzes the reduction of oxygen to water. Electrons originating from reduced cytochrome c in the intermembrane space (IMS) are transferred via the dinuclear copper A center (CU(A)) of Cox2 and heme A of Cox1 to the active site in Cox1, a binuclear center (BNC) formed by heme A3 and copper B (CU(B)). The BNC reduces molecular oxygen to 2 water molecules using 4 electrons from cytochrome c in the IMS and 4 protons from the mitochondrial matrix. The protein is Cytochrome c oxidase subunit 13, mitochondrial (eat-5) of Neurospora crassa (strain ATCC 24698 / 74-OR23-1A / CBS 708.71 / DSM 1257 / FGSC 987).